The chain runs to 599 residues: Aspartate--tRNA ligase (599 aa).

E180 contributes to the L-aspartate binding site. The segment at 204-207 (QIFK) is aspartate. R226 provides a ligand contact to L-aspartate. Residues 226 to 228 (RDE) and Q235 contribute to the ATP site. H454 provides a ligand contact to L-aspartate. E488 serves as a coordination point for ATP. R495 serves as a coordination point for L-aspartate. An ATP-binding site is contributed by 540–543 (GLDR).

It belongs to the class-II aminoacyl-tRNA synthetase family. Type 1 subfamily. In terms of assembly, homodimer.

The protein localises to the cytoplasm. It carries out the reaction tRNA(Asp) + L-aspartate + ATP = L-aspartyl-tRNA(Asp) + AMP + diphosphate. Catalyzes the attachment of L-aspartate to tRNA(Asp) in a two-step reaction: L-aspartate is first activated by ATP to form Asp-AMP and then transferred to the acceptor end of tRNA(Asp). The chain is Aspartate--tRNA ligase from Clostridium botulinum (strain Eklund 17B / Type B).